The chain runs to 672 residues: UvrABC system protein B (672 aa).

A Helicase ATP-binding domain is found at Glu-26–Arg-183. Gly-39–Thr-46 lines the ATP pocket. A Beta-hairpin motif is present at residues Tyr-92–Val-115. The region spanning Gln-431–Leu-597 is the Helicase C-terminal domain. The tract at residues Asp-601–Tyr-623 is disordered. One can recognise a UVR domain in the interval Glu-632–Gln-667.

The protein belongs to the UvrB family. As to quaternary structure, forms a heterotetramer with UvrA during the search for lesions. Interacts with UvrC in an incision complex.

Its subcellular location is the cytoplasm. The UvrABC repair system catalyzes the recognition and processing of DNA lesions. A damage recognition complex composed of 2 UvrA and 2 UvrB subunits scans DNA for abnormalities. Upon binding of the UvrA(2)B(2) complex to a putative damaged site, the DNA wraps around one UvrB monomer. DNA wrap is dependent on ATP binding by UvrB and probably causes local melting of the DNA helix, facilitating insertion of UvrB beta-hairpin between the DNA strands. Then UvrB probes one DNA strand for the presence of a lesion. If a lesion is found the UvrA subunits dissociate and the UvrB-DNA preincision complex is formed. This complex is subsequently bound by UvrC and the second UvrB is released. If no lesion is found, the DNA wraps around the other UvrB subunit that will check the other stand for damage. The chain is UvrABC system protein B from Edwardsiella ictaluri (strain 93-146).